The sequence spans 2016 residues: Sodium channel protein type 5 subunit alpha (2016 aa).

Topologically, residues 1–129 (MANFLLPRGT…IRRAAVKILV (129 aa)) are cytoplasmic. A disordered region spans residues 28–56 (MAEKQARGSTTLQESREGLPEEEAPRPQL). Ser-36 carries the post-translational modification Phosphoserine. Thr-38 carries the phosphothreonine modification. Over residues 41–52 (ESREGLPEEEAP) the composition is skewed to basic and acidic residues. Residues 113–420 (VLSPFHPIRR…VVAMAYEEQN (308 aa)) form an I repeat. A helical transmembrane segment spans residues 130–149 (HSLFNMLIMCTILTNCVFMA). At 150 to 157 (QHDPPPWT) the chain is on the extracellular side. The helical transmembrane segment at 158–179 (KYVEYTFTAIYTFESLVKILAR) threads the bilayer. Residues 180–188 (GFCLHAFTF) lie on the Cytoplasmic side of the membrane. The chain crosses the membrane as a helical span at residues 189 to 209 (LRDPWNWLDFSVIIMAYTTEF). Topologically, residues 210–216 (VDLGNVS) are extracellular. N-linked (GlcNAc...) asparagine glycosylation is present at Asn-214. The chain crosses the membrane as a helical span at residues 217–236 (ALRTFRVLRALKTISVISGL). Over 237-249 (KTIVGALIQSVKK) the chain is Cytoplasmic. The helical transmembrane segment at 250 to 272 (LADVMVLTVFCLSVFALIGLQLF) threads the bilayer. Residues 273 to 357 (MGNLRHKCVR…PDHGYTSFDS (85 aa)) lie on the Extracellular side of the membrane. A disulfide bond links Cys-280 and Cys-335. 5 N-linked (GlcNAc...) asparagine glycosylation sites follow: Asn-283, Asn-288, Asn-291, Asn-318, and Asn-328. Positions 358-378 (FAWAFLALFRLMTQDCWERLY) form an intramembrane region, pore-forming. Residues 379 to 386 (QQTLRSAG) are Extracellular-facing. The helical transmembrane segment at 387 to 413 (KIYMIFFMLVIFLGSFYLVNLILAVVA) threads the bilayer. The Cytoplasmic portion of the chain corresponds to 414–719 (MAYEEQNQAT…VKLVVMDPFT (306 aa)). 4 positions are modified to phosphoserine: Ser-457, Ser-460, Ser-483, and Ser-484. A disordered region spans residues 461–591 (LEMSPLAPVN…APGHALHGKK (131 aa)). Thr-486 carries the phosphothreonine modification. Basic and acidic residues predominate over residues 491-503 (EDRLPKSDSEDGP). A phosphoserine mark is found at Ser-497 and Ser-510. Positions 509–528 (LSLTRGLSRTSMKPRSSRGS) are enriched in polar residues. 2 positions are modified to dimethylated arginine; alternate: Arg-513 and Arg-526. Residues Arg-513 and Arg-526 each carry the omega-N-methylarginine; alternate modification. Residues Ser-539, Ser-571, Ser-664, and Ser-667 each carry the phosphoserine modification. Polar residues predominate over residues 570–580 (TSAQGQPSPGT). Arg-680 is subject to Dimethylated arginine; alternate. Arg-680 is modified (omega-N-methylarginine; alternate). The stretch at 699-969 (CCPLWMSIKQ…QLALARIQRG (271 aa)) is one II repeat. Residues 720–737 (DLTITMCIVLNTLFMALE) form a helical membrane-spanning segment. Residues 738–746 (HYNMTSEFE) lie on the Extracellular side of the membrane. An N-linked (GlcNAc...) asparagine glycan is attached at Asn-740. Residues 747-769 (EMLQVGNLVFTGIFTAEMTFKII) traverse the membrane as a helical segment. Residues 770-775 (ALDPYY) are Cytoplasmic-facing. A helical membrane pass occupies residues 776–796 (YFQQGWNIFDSIIVILSLMEL). Residues 797 to 806 (GLSRMSNLSV) lie on the Extracellular side of the membrane. An N-linked (GlcNAc...) asparagine glycan is attached at Asn-803. A helical transmembrane segment spans residues 807-821 (LRSFRLLRVFKLAKS). The Cytoplasmic portion of the chain corresponds to 822–838 (WPTLNTLIKIIGNSVGA). Residues 839–860 (LGNLTLVLAIIVFIFAVVGMQL) traverse the membrane as a helical segment. Topologically, residues 861–884 (FGKNYSELRDSDSGLLPRWHMMDF) are extracellular. An N-linked (GlcNAc...) asparagine glycan is attached at Asn-864. The pore-forming intramembrane region spans 885–903 (FHAFLIIFRILCGEWIETM). Over 904-912 (WDCMEVSGQ) the chain is Extracellular. Cys-906 and Cys-915 are oxidised to a cystine. Residues 913-941 (SLCLLVFLLVMVIGNLVVLNLFLALLLSS) traverse the membrane as a helical segment. At 942–1203 (FSADNLTAPD…LRKTCYHIVE (262 aa)) the chain is on the cytoplasmic side. A disordered region spans residues 1005–1141 (IATPYSPPPP…PEDSCSEGST (137 aa)). Basic and acidic residues predominate over residues 1015-1030 (ETEKVPPTRKETRFEE). Low complexity predominate over residues 1033 to 1044 (QPGQGTPGDPEP). Positions 1054 to 1071 (SDTDDQEEDEENSLGTEE) are enriched in acidic residues. Residues 1096–1113 (SQVSATASSEAEASASQA) show a composition bias toward low complexity. Residues 1187-1501 (PGKVWWRLRK…KKYYNAMKKL (315 aa)) form an III repeat. A helical membrane pass occupies residues 1204–1225 (HSWFETFIIFMILLSSGALAFE). Topologically, residues 1226 to 1236 (DIYLEERKTIK) are extracellular. Residues 1237–1259 (VLLEYADKMFTYVFVLEMLLKWV) form a helical membrane-spanning segment. Topologically, residues 1260 to 1268 (AYGFKKYFT) are cytoplasmic. Residues 1269-1291 (NAWCWLDFLIVDVSLVSLVANTL) traverse the membrane as a helical segment. At 1292 to 1297 (GFAEMG) the chain is on the extracellular side. A helical transmembrane segment spans residues 1298–1317 (PIKSLRTLRALRPLRALSRF). The Cytoplasmic portion of the chain corresponds to 1318–1330 (EGMRVVVNALVGA). Residues 1331 to 1355 (IPSIMNVLLVCLIFWLIFSIMGVNL) form a helical membrane-spanning segment. Residues 1356–1400 (FAGKFGRCINQTEGDLPLNYTIVNNKSQCESLNLTGELYWTKVKV) are Extracellular-facing. Residues Asn-1365, Asn-1374, Asn-1380, and Asn-1388 are each glycosylated (N-linked (GlcNAc...) asparagine). Residues 1401-1422 (NFDNVGAGYLALLQVATFKGWM) constitute an intramembrane region (pore-forming). Residues 1423–1445 (DIMYAAVDSRGYEEQPQWEYNLY) lie on the Extracellular side of the membrane. The helical transmembrane segment at 1446–1470 (MYIYFVIFIIFGSFFTLNLFIGVII) threads the bilayer. At 1471 to 1528 (DNFNQQKKKLGGQDIFMTEEQKKYYNAMKKLGSKKPQKPIPRPLNKYQGFIFDIVTKQ) the chain is on the cytoplasmic side. Residue Ser-1503 is modified to Phosphoserine; by PKC. An IV repeat occupies 1510–1807 (IPRPLNKYQG…WEKFDPEATQ (298 aa)). Residues 1529–1547 (AFDVTIMFLICLNMVTMMV) traverse the membrane as a helical segment. At 1548-1558 (ETDDQSPEKIN) the chain is on the extracellular side. Residues 1559–1580 (ILAKINLLFVAIFTGECIVKLA) traverse the membrane as a helical segment. Residues 1581-1589 (ALRHYYFTN) are Cytoplasmic-facing. Residues 1590-1612 (SWNIFDFVVVILSIVGTVLSDII) form a helical membrane-spanning segment. Residues 1613 to 1619 (QKYFFSP) are Extracellular-facing. A helical transmembrane segment spans residues 1620–1640 (TLFRVIRLARIGRILRLIRGA). Over 1641 to 1650 (KGIRTLLFAL) the chain is Cytoplasmic. Residues 1651-1679 (MMSLPALFNIGLLLFLVMFIYSIFGMANF) form a helical membrane-spanning segment. The Extracellular segment spans residues 1680-1697 (AYVKWEAGIDDMFNFQTF). The pore-forming intramembrane region spans 1698–1714 (ANSMLCLFQITTSAGWD). Topologically, residues 1715 to 1745 (GLLSPILNTGPPYCDPTLPNSNGSRGDCGSP) are extracellular. Asn-1736 carries N-linked (GlcNAc...) asparagine glycosylation. Residues 1746 to 1771 (AVGILFFTTYIIISFLIVVNMYIAII) form a helical membrane-spanning segment. At 1772-2016 (LENFSVATEE…SPDRDRESIV (245 aa)) the chain is on the cytoplasmic side. An interaction with FGF13 region spans residues 1839–1901 (DLPMVSGDRI…ITTTLRRKHE (63 aa)). In terms of domain architecture, IQ spans 1901 to 1930 (EEVSAMVIQRAFRRHLLQRSLKHASFLFRQ). Positions 1959-1979 (PLGPPSSSSISSTSFPPSYDS) are enriched in low complexity. A disordered region spans residues 1959 to 2016 (PLGPPSSSSISSTSFPPSYDSVTRATSDNLQVRGSDYSHSEDLADFPPSPDRDRESIV). The tract at residues 1974–1977 (PPSY) is interaction with NEDD4, NEDD4L and WWP2. Over residues 1981–1990 (TRATSDNLQV) the composition is skewed to polar residues.

Belongs to the sodium channel (TC 1.A.1.10) family. Nav1.5/SCN5A subfamily. As to quaternary structure, cannot form the same regulatory interactions with beta subunits as other Navs do. Interacts with the PDZ domain of the syntrophin SNTA1, SNTB1 and SNTB2. Interacts with NEDD4, NEDD4L, WWP2 and GPD1L. Interacts with CALM. Interacts with FGF13; the interaction is direct and FGF13 may regulate SNC5A density at membranes and function. May also interact with FGF12 and FGF14. Interacts with TMEM233. Interacts with the spider Jingzhaotoxin-I (AC P83974, AC B1P1B7, AC B1P1B8). Interacts with ANK3. Interacts with PKP2 (via N-terminus). Interacts with XIRP2; the interaction is required for normal action potential configuration in the heart. In terms of processing, ubiquitinated by NEDD4L; which promotes its endocytosis. Does not seem to be ubiquitinated by NEDD4 or WWP2. Phosphorylation at Ser-1503 by PKC in a highly conserved cytoplasmic loop slows inactivation of the sodium channel and reduces peak sodium currents. Regulated through phosphorylation by CaMK2D. Post-translationally, lacks the cysteine which covalently binds the conotoxin GVIIJ. This cysteine (position 868) is speculated in other sodium channel subunits alpha to be implied in covalent binding with the sodium channel subunit beta-2 or beta-4. In terms of processing, N-glycosylated at Asn-318, probably hinders potential interaction with regulatory subunits. As to expression, found in jejunal circular smooth muscle cells (at protein level). Expressed in human atrial and ventricular cardiac muscle but not in adult skeletal muscle, brain, myometrium, liver, or spleen. Isoform 4 is expressed in brain.

Its subcellular location is the cell membrane. The protein localises to the cytoplasm. The protein resides in the perinuclear region. It localises to the sarcolemma. It is found in the T-tubule. Its subcellular location is the cell junction. The enzyme catalyses Na(+)(in) = Na(+)(out). With respect to regulation, channel inactivation is regulated by intracellular calcium levels. It is a tetrodotoxin-resistant voltage-gated Na(+) channel (Nav). In terms of biological role, pore-forming subunit of Nav1.5, a voltage-gated sodium (Nav) channel that directly mediates the depolarizing phase of action potentials in excitable membranes. Navs, also called VGSCs (voltage-gated sodium channels) or VDSCs (voltage-dependent sodium channels), operate by switching between closed and open conformations depending on the voltage difference across the membrane. In the open conformation they allow Na(+) ions to selectively pass through the pore, along their electrochemical gradient. The influx of Na(+) ions provokes membrane depolarization, initiating the propagation of electrical signals throughout cells and tissues. Nav1.5 is the predominant sodium channel expressed in myocardial cells and it is responsible for the initial upstroke of the action potential in cardiac myocytes, thereby initiating the heartbeat. Required for normal electrical conduction including formation of the infranodal ventricular conduction system and normal action potential configuration, as a result of its interaction with XIRP2. This chain is Sodium channel protein type 5 subunit alpha, found in Homo sapiens (Human).